Consider the following 596-residue polypeptide: Sodium/mannose cotransporter SLC5A10 (596 aa).

Topologically, residues 1 to 15 (MAANSTSDLHTPGTQ) are extracellular. N4 carries N-linked (GlcNAc...) asparagine glycosylation. A helical transmembrane segment spans residues 16-36 (LSVADIIVITVYFALNVAVGI). At 37 to 72 (WSSCRASRNTVNGYFLAGRDMTWWPIGASLFASSEG) the chain is on the cytoplasmic side. A helical membrane pass occupies residues 73 to 93 (SGLFIGLAGSGAAGGLAVAGF). Over 94–99 (EWNATY) the chain is Extracellular. N-linked (GlcNAc...) asparagine glycosylation is present at N96. A helical transmembrane segment spans residues 100–120 (VLLALAWVFVPIYISSEIVTL). Topologically, residues 121 to 149 (PEYIQKRYGGQRIRMYLSVLSLLLSVFTK) are cytoplasmic. Phosphoserine is present on residues S141 and S145. Phosphothreonine is present on T148. A helical membrane pass occupies residues 150–170 (ISLDLYAGALFVHICLGWNFY). At 171-173 (LST) the chain is on the extracellular side. Residues 174–194 (ILTLGITALYTIAGGLAAVIY) traverse the membrane as a helical segment. The Cytoplasmic segment spans residues 195 to 200 (TDALQT). Residues 201 to 221 (LIMVVGAVILTIKAFDQIGGY) form a helical membrane-spanning segment. The Extracellular segment spans residues 222–264 (GQLEAAYAQAIPSRTIANTTCHLPRTDAMHMFRDPHTGDLPWT). The helical transmembrane segment at 265–285 (GMTFGLTIMATWYWCTDQVIV) threads the bilayer. Residues 286–300 (QRSLSARDLNHAKAG) lie on the Cytoplasmic side of the membrane. Residues 301 to 321 (SILASYLKMLPMGLIIMPGMI) form a helical membrane-spanning segment. At 322 to 355 (SRALFPDDVGCVVPSECLRACGAEVGCSNIAYPK) the chain is on the extracellular side. A helical transmembrane segment spans residues 356 to 376 (LVMELMPIGLRGLMIAVMLAA). Residues 377–409 (LMSSLTSIFNSSSTLFTMDIWRRLRPRSGEREL) lie on the Cytoplasmic side of the membrane. The helical transmembrane segment at 410–430 (LLVGRLVIVALIGVSVAWIPV) threads the bilayer. Topologically, residues 431 to 443 (LQDSNSGQLFIYM) are extracellular. The chain crosses the membrane as a helical span at residues 444–464 (QSVTSSLAPPVTAVFVLGVFW). The Cytoplasmic portion of the chain corresponds to 465–471 (RRANEQG). Residues 472–492 (AFWGLIAGLVVGATRLVLEFL) form a helical membrane-spanning segment. The Extracellular segment spans residues 493 to 513 (NPAPPCGEPDTRPAVLGSIHY). A helical transmembrane segment spans residues 514 to 534 (LHFAVALFALSGAVVVAGSLL). The Cytoplasmic segment spans residues 535 to 575 (TPPPQSVQIENLTWWTLAQDVPLGTKAGDGQTPQKHAFWAR). A helical membrane pass occupies residues 576–596 (VCGFNAILLMCVNIFFYAYFA).

Belongs to the sodium:solute symporter (SSF) (TC 2.A.21) family. Predominantly expressed at high levels in kidney. Very low expression is detected in testes. In terms of tissue distribution, expressed in kidney. As to expression, the most abundant isoform expressed in kidney.

It is found in the apical cell membrane. The catalysed reaction is D-mannose(out) + Na(+)(out) = D-mannose(in) + Na(+)(in). It carries out the reaction D-fructopyranose(out) + Na(+)(out) = D-fructopyranose(in) + Na(+)(in). With respect to regulation, inhibited by phlorizin. In terms of biological role, electrogenic Na+-coupled sugar symporter that actively transports D-mannose or D-fructose at the plasma membrane, with a Na+ to sugar coupling ratio of 1:1. Transporter activity is driven by a transmembrane Na+ electrochemical gradient set by the Na+/K+ pump. Exclusively recognizes sugar substrates having a pyranose ring with an axial hydroxyl group on carbon 2. Has likely evolved to enable renal reabsorption of D-mannose, an important constituent of oligosaccharide chains of glycoproteins. Contributes to dietary D-fructose reabsorption from glomerular filtrate across the brush border of the kidney. Appears to have no transporter activity. This is Sodium/mannose cotransporter SLC5A10 (SLC5A10) from Homo sapiens (Human).